A 469-amino-acid chain; its full sequence is GTPase Der (469 aa).

2 consecutive EngA-type G domains span residues 3–166 (PVIA…PEDE) and 177–350 (LRLA…ESAN). GTP is bound by residues 9–16 (GRPNVGKS), 56–60 (DTGGI), 118–121 (NKVD), 183–190 (GRPNVGKS), 230–234 (DTAGV), and 295–298 (NKWD). One can recognise a KH-like domain in the interval 351–435 (LKVSPAKLTQ…PVKIEFKTSE (85 aa)).

This sequence belongs to the TRAFAC class TrmE-Era-EngA-EngB-Septin-like GTPase superfamily. EngA (Der) GTPase family. In terms of assembly, associates with the 50S ribosomal subunit.

In terms of biological role, GTPase that plays an essential role in the late steps of ribosome biogenesis. The chain is GTPase Der from Acinetobacter baumannii (strain ACICU).